We begin with the raw amino-acid sequence, 609 residues long: Proline--tRNA ligase (609 aa).

Belongs to the class-II aminoacyl-tRNA synthetase family. ProS type 1 subfamily. As to quaternary structure, homodimer.

It is found in the cytoplasm. It carries out the reaction tRNA(Pro) + L-proline + ATP = L-prolyl-tRNA(Pro) + AMP + diphosphate. In terms of biological role, catalyzes the attachment of proline to tRNA(Pro) in a two-step reaction: proline is first activated by ATP to form Pro-AMP and then transferred to the acceptor end of tRNA(Pro). As ProRS can inadvertently accommodate and process non-cognate amino acids such as alanine and cysteine, to avoid such errors it has two additional distinct editing activities against alanine. One activity is designated as 'pretransfer' editing and involves the tRNA(Pro)-independent hydrolysis of activated Ala-AMP. The other activity is designated 'posttransfer' editing and involves deacylation of mischarged Ala-tRNA(Pro). The misacylated Cys-tRNA(Pro) is not edited by ProRS. This chain is Proline--tRNA ligase, found in Synechococcus sp. (strain JA-2-3B'a(2-13)) (Cyanobacteria bacterium Yellowstone B-Prime).